A 1174-amino-acid polypeptide reads, in one-letter code: DNA-directed RNA polymerase subunit beta' (1174 aa).

The Zn(2+) site is built by cysteine 60, cysteine 62, cysteine 75, and cysteine 78. Residues aspartate 450, aspartate 452, and aspartate 454 each contribute to the Mg(2+) site. 4 residues coordinate Zn(2+): cysteine 795, cysteine 869, cysteine 876, and cysteine 879.

This sequence belongs to the RNA polymerase beta' chain family. In terms of assembly, the RNAP catalytic core consists of 2 alpha, 1 beta, 1 beta' and 1 omega subunit. When a sigma factor is associated with the core the holoenzyme is formed, which can initiate transcription. It depends on Mg(2+) as a cofactor. Zn(2+) serves as cofactor.

The enzyme catalyses RNA(n) + a ribonucleoside 5'-triphosphate = RNA(n+1) + diphosphate. DNA-dependent RNA polymerase catalyzes the transcription of DNA into RNA using the four ribonucleoside triphosphates as substrates. The chain is DNA-directed RNA polymerase subunit beta' from Clostridium kluyveri (strain ATCC 8527 / DSM 555 / NBRC 12016 / NCIMB 10680 / K1).